Consider the following 403-residue polypeptide: Phosphopentomutase (403 aa).

Residues D13, D298, H303, D339, H340, and H351 each coordinate Mn(2+).

It belongs to the phosphopentomutase family. Requires Mn(2+) as cofactor.

Its subcellular location is the cytoplasm. It catalyses the reaction 2-deoxy-alpha-D-ribose 1-phosphate = 2-deoxy-D-ribose 5-phosphate. The catalysed reaction is alpha-D-ribose 1-phosphate = D-ribose 5-phosphate. The protein operates within carbohydrate degradation; 2-deoxy-D-ribose 1-phosphate degradation; D-glyceraldehyde 3-phosphate and acetaldehyde from 2-deoxy-alpha-D-ribose 1-phosphate: step 1/2. In terms of biological role, isomerase that catalyzes the conversion of deoxy-ribose 1-phosphate (dRib-1-P) and ribose 1-phosphate (Rib-1-P) to deoxy-ribose 5-phosphate (dRib-5-P) and ribose 5-phosphate (Rib-5-P), respectively. The chain is Phosphopentomutase from Streptococcus equi subsp. zooepidemicus (strain H70).